The primary structure comprises 29 residues: MIKVPLPDVIFVAHRNKHTRQGNITQTKY.

This is an uncharacterized protein from Saccharomyces cerevisiae (strain ATCC 204508 / S288c) (Baker's yeast).